The sequence spans 387 residues: Putative protein FAM157C (387 aa).

3 disordered regions span residues 1–21, 182–226, and 329–353; these read MGPL…PLPK, TARP…GAEP, and RARD…TSSG.

It belongs to the FAM157 family.

In Homo sapiens (Human), this protein is Putative protein FAM157C (FAM157C).